Here is a 310-residue protein sequence, read N- to C-terminus: Dehydrodolichyl diphosphate synthase 2 (310 aa).

It belongs to the UPP synthase family. Mg(2+) serves as cofactor.

Its pathway is protein modification; protein glycosylation. Catalyzes cis-prenyl chain elongation to produce the polyprenyl backbone of dolichol, a glycosyl carrier-lipid required for the biosynthesis of several classes of glycoprotein. This chain is Dehydrodolichyl diphosphate synthase 2, found in Arabidopsis thaliana (Mouse-ear cress).